Here is a 370-residue protein sequence, read N- to C-terminus: Probable phosphoserine aminotransferase (370 aa).

Arg45 provides a ligand contact to L-glutamate. Pyridoxal 5'-phosphate-binding positions include 79–80, Trp105, Thr154, Asp175, and Gln198; that span reads GT. The residue at position 199 (Lys199) is an N6-(pyridoxal phosphate)lysine. 240-241 contacts pyridoxal 5'-phosphate; the sequence is NT.

The protein belongs to the class-V pyridoxal-phosphate-dependent aminotransferase family. SerC subfamily. Homodimer. Pyridoxal 5'-phosphate is required as a cofactor.

The catalysed reaction is O-phospho-L-serine + 2-oxoglutarate = 3-phosphooxypyruvate + L-glutamate. It catalyses the reaction 4-(phosphooxy)-L-threonine + 2-oxoglutarate = (R)-3-hydroxy-2-oxo-4-phosphooxybutanoate + L-glutamate. Its pathway is amino-acid biosynthesis; L-serine biosynthesis; L-serine from 3-phospho-D-glycerate: step 2/3. It participates in cofactor biosynthesis; pyridoxine 5'-phosphate biosynthesis; pyridoxine 5'-phosphate from D-erythrose 4-phosphate: step 3/5. Functionally, catalyzes the reversible conversion of 3-phosphohydroxypyruvate to phosphoserine and of 3-hydroxy-2-oxo-4-phosphonooxybutanoate to phosphohydroxythreonine. The protein is Probable phosphoserine aminotransferase of Caenorhabditis elegans.